The sequence spans 155 residues: Xanthine-guanine phosphoribosyltransferase (155 aa).

Residues 37 to 38 (RG), R69, and 90 to 98 (DDLVDTGGT) each bind 5-phospho-alpha-D-ribose 1-diphosphate. R69 is a GMP binding site. D91 is a binding site for Mg(2+). Positions 94 and 137 each coordinate guanine. Positions 94 and 137 each coordinate xanthine. GMP contacts are provided by residues 94–98 (DTGGT) and 136–137 (WI).

It belongs to the purine/pyrimidine phosphoribosyltransferase family. XGPT subfamily. As to quaternary structure, homotetramer. Requires Mg(2+) as cofactor.

The protein localises to the cell inner membrane. The enzyme catalyses GMP + diphosphate = guanine + 5-phospho-alpha-D-ribose 1-diphosphate. It catalyses the reaction XMP + diphosphate = xanthine + 5-phospho-alpha-D-ribose 1-diphosphate. It carries out the reaction IMP + diphosphate = hypoxanthine + 5-phospho-alpha-D-ribose 1-diphosphate. It functions in the pathway purine metabolism; GMP biosynthesis via salvage pathway; GMP from guanine: step 1/1. The protein operates within purine metabolism; XMP biosynthesis via salvage pathway; XMP from xanthine: step 1/1. In terms of biological role, purine salvage pathway enzyme that catalyzes the transfer of the ribosyl-5-phosphate group from 5-phospho-alpha-D-ribose 1-diphosphate (PRPP) to the N9 position of the 6-oxopurines guanine and xanthine to form the corresponding ribonucleotides GMP (guanosine 5'-monophosphate) and XMP (xanthosine 5'-monophosphate), with the release of PPi. To a lesser extent, also acts on hypoxanthine. This Aeromonas salmonicida (strain A449) protein is Xanthine-guanine phosphoribosyltransferase.